The following is a 317-amino-acid chain: Apolipoprotein E (317 aa).

The N-terminal stretch at 1 to 18 (MKVLWAALLVTFLAGCQA) is a signal peptide. Repeat copies occupy residues 80 to 101 (TLMDETMKELKAYKSELEEQLS), 102 to 123 (PVAEETRARLSKELQAAQARLG), 124 to 145 (ADMEDVRSRLVQYRSEVQAMLG), 146 to 167 (QSTEELRARLASHLRKLRKRLL), 168 to 189 (RDADDLQKRLAVYQAGAREGAE), 190 to 211 (RGVSAIRERLGPLVEQGRVRAA), 212 to 233 (TVGSLASQPLQERAQALGERLR), and 234 to 255 (ARMEEMGSRTRDRLDEVKEQVA). The interval 80 to 255 (TLMDETMKEL…RLDEVKEQVA (176 aa)) is 8 X 22 AA approximate tandem repeats. Methionine 143 carries the methionine sulfoxide modification. Serine 147 bears the Phosphoserine mark. Residues 158–168 (HLRKLRKRLLR) form an LDL and other lipoprotein receptors binding region. 162-165 (LRKR) provides a ligand contact to heparin. The lipid-binding and lipoprotein association stretch occupies residues 210–290 (AATVGSLASQ…SWFEPLVEDM (81 aa)). Position 229 to 236 (229 to 236 (GERLRARM)) interacts with heparin. Residues 266–317 (QQISLQAEAFQARLKSWFEPLVEDMQRQWAGLVEKVQAAVGASTAPVPIDNH) form a homooligomerization region. The tract at residues 278 to 290 (RLKSWFEPLVEDM) is specificity for association with VLDL.

Belongs to the apolipoprotein A1/A4/E family. In terms of assembly, homotetramer. May interact with ABCA1; functionally associated with ABCA1 in the biogenesis of HDLs. May interact with APP/A4 amyloid-beta peptide; the interaction is extremely stable in vitro but its physiological significance is unclear. May interact with MAPT. May interact with MAP2. In the cerebrospinal fluid, interacts with secreted SORL1. Interacts with PMEL; this allows the loading of PMEL luminal fragment on ILVs to induce fibril nucleation. APOE exists as multiple glycosylated and sialylated glycoforms within cells and in plasma. The extent of glycosylation and sialylation are tissue and context specific. Post-translationally, glycated in plasma VLDL. In terms of processing, phosphorylated by FAM20C in the extracellular medium.

The protein localises to the secreted. The protein resides in the extracellular space. It is found in the extracellular matrix. It localises to the extracellular vesicle. Its subcellular location is the endosome. The protein localises to the multivesicular body. Its function is as follows. APOE is an apolipoprotein, a protein associating with lipid particles, that mainly functions in lipoprotein-mediated lipid transport between organs via the plasma and interstitial fluids. APOE is a core component of plasma lipoproteins and is involved in their production, conversion and clearance. Apolipoproteins are amphipathic molecules that interact both with lipids of the lipoprotein particle core and the aqueous environment of the plasma. As such, APOE associates with chylomicrons, chylomicron remnants, very low density lipoproteins (VLDL) and intermediate density lipoproteins (IDL) but shows a preferential binding to high-density lipoproteins (HDL). It also binds a wide range of cellular receptors including the LDL receptor/LDLR, the LDL receptor-related proteins LRP1, LRP2 and LRP8 and the very low-density lipoprotein receptor/VLDLR that mediate the cellular uptake of the APOE-containing lipoprotein particles. Finally, APOE also has a heparin-binding activity and binds heparan-sulfate proteoglycans on the surface of cells, a property that supports the capture and the receptor-mediated uptake of APOE-containing lipoproteins by cells. A main function of APOE is to mediate lipoprotein clearance through the uptake of chylomicrons, VLDLs, and HDLs by hepatocytes. APOE is also involved in the biosynthesis by the liver of VLDLs as well as their uptake by peripheral tissues ensuring the delivery of triglycerides and energy storage in muscle, heart and adipose tissues. By participating in the lipoprotein-mediated distribution of lipids among tissues, APOE plays a critical role in plasma and tissues lipid homeostasis. APOE is also involved in two steps of reverse cholesterol transport, the HDLs-mediated transport of cholesterol from peripheral tissues to the liver, and thereby plays an important role in cholesterol homeostasis. First, it is functionally associated with ABCA1 in the biogenesis of HDLs in tissues. Second, it is enriched in circulating HDLs and mediates their uptake by hepatocytes. APOE also plays an important role in lipid transport in the central nervous system, regulating neuron survival and sprouting. The polypeptide is Apolipoprotein E (APOE) (Macaca fascicularis (Crab-eating macaque)).